The primary structure comprises 292 residues: uncharacterized protein (292 aa).

This is an uncharacterized protein from Haemophilus influenzae (strain ATCC 51907 / DSM 11121 / KW20 / Rd).